Reading from the N-terminus, the 1029-residue chain is Protein phosphatase 1 regulatory subunit 12A (1029 aa).

The KVKF motif motif lies at 35–38 (KVKF). 6 ANK repeats span residues 39-68 (DDGA…DINY), 72-101 (DGLT…NINQ), 105-134 (EGWI…HVGA), 138-164 (EGDT…RQGV), 198-227 (SGGT…DVNI), and 231-260 (DGWT…DMET). Residues asparagine 67 and asparagine 100 each carry the (3S)-3-hydroxyasparagine; by HIF1AN modification. Asparagine 226 is modified ((3S)-3-hydroxyasparagine; by HIF1AN). A disordered region spans residues 290 to 786 (LHSEKRDKKS…APSSSSLSTL (497 aa)). The segment covering 291–300 (HSEKRDKKSP) has biased composition (basic and acidic residues). A Phosphoserine modification is found at serine 299. Residues 302-314 (IESTANMENNQPQ) are compositionally biased toward polar residues. The span at 318–353 (KNKETLIIEPEKNASRIESLEHEKADEEEEGKKDES) shows a compositional bias: basic and acidic residues. The segment covering 357 to 369 (SEEDEEDDSESEA) has biased composition (acidic residues). Positions 385 to 402 (TSSTQAAPAAVTAPTLSS) are enriched in low complexity. 2 positions are modified to phosphoserine: serine 422 and serine 432. Residues 422–432 (SPKEEERKDES) show a composition bias toward basic and acidic residues. Threonine 443 bears the Phosphothreonine mark. Residue serine 445 is modified to Phosphoserine; by NUAK1. The residue at position 446 (tyrosine 446) is a Phosphotyrosine. Positions 469-480 (RSASSPRLSSSL) are enriched in low complexity. Position 472 is a phosphoserine; by NUAK1 (serine 472). A Phosphoserine; by CDK1 modification is found at serine 473. Serine 477 bears the Phosphoserine mark. Over residues 481–491 (DNKEKEKDNKG) the composition is skewed to basic and acidic residues. Phosphoserine is present on residues serine 507 and serine 509. Polar residues predominate over residues 540 to 551 (NSSINEGSTYHR). Residues 564 to 578 (SCSVPSTTSTPTVTS) show a composition bias toward low complexity. Positions 585 to 594 (SLPSSTSTAA) are enriched in polar residues. Over residues 596 to 610 (TPPGSSSAGTQSSTS) the composition is skewed to low complexity. Phosphoserine occurs at positions 601 and 618. A compositionally biased stretch (basic and acidic residues) spans 614-625 (WAEDSTEKEKDS). Positions 626–656 (APTAVTIPVAPTVVNAAAPSTTTLTTTTAGT) are enriched in low complexity. Residues 671–680 (VRDEESESQR) are compositionally biased toward basic and acidic residues. Positions 680–863 (RKARSRQARQ…VSFWTQDSDE (184 aa)) are interaction with ROCK2. Residues 681 to 691 (KARSRQARQSR) are compositionally biased toward basic residues. Phosphoserine; by PKA and PKG; in vitro occurs at positions 690 and 693. Threonine 694 carries the post-translational modification Phosphothreonine; by ROCK1, ROCK2, CDC42BP, ZIPK/DAPK3 and RAF1. Residues 716 to 765 (RTREQENEEKEKEEKEKQDKEKQEEKKESEASREDEYKQKYSRTYDETYT) are compositionally biased toward basic and acidic residues. Low complexity predominate over residues 771-786 (STSSSSAPSSSSLSTL). Serine 801 is modified (phosphoserine). The tract at residues 808 to 927 (AYSRGLAKEN…PYSSRLEKDD (120 aa)) is disordered. A compositionally biased stretch (basic and acidic residues) spans 813–839 (LAKENEREGEKKEEEKEGEDKSQPKSI). The span at 840–851 (RERRRPREKRRS) shows a compositional bias: basic residues. Serine 851 bears the Phosphoserine; by ROCK2 mark. Serine 861 and serine 870 each carry phosphoserine. The segment covering 866–882 (QERQSDTEDGSSKRETQ) has biased composition (basic and acidic residues). Positions 883-897 (TDSVSRYDSSSTSSS) are enriched in low complexity. Phosphoserine occurs at positions 902 and 907. Position 909 is a phosphoserine; by NUAK1 (serine 909). Basic and acidic residues predominate over residues 913-927 (LEDRKPYSSRLEKDD). Serine 994 carries the phosphoserine modification.

In terms of assembly, PP1 comprises a catalytic subunit, PPP1CA, PPP1CB or PPP1CC, and one or several targeting or regulatory subunits. PPP1R12A mediates binding to myosin. Interacts with ARHA and CIT. Binds PPP1R12B, ROCK1 and IL16. Interacts directly with PRKG1. Non-covalent dimer of 2 dimers; PRKG1-PRKG1 and PPP1R12A-PPP1R12A. Interacts with SMTNL1. Interacts with PPP1CB; the interaction is direct. Interacts (when phosphorylated at Ser-445, Ser-472 and Ser-910) with 14-3-3. Interacts with ROCK1 and ROCK2. Interacts with isoform 1 and isoform 2 of ZIPK/DAPK3. Interacts with RAF1. Interacts with HIF1AN. Interacts with NCKAP1L. Post-translationally, phosphorylated by CIT (Rho-associated kinase). Phosphorylated cooperatively by ROCK1 and CDC42BP on Thr-694. Phosphorylated on upon DNA damage, probably by ATM or ATR. In vitro, phosphorylation of Ser-693 by PKA and PKG appears to prevent phosphorylation of the inhibitory site Thr-694, probably mediated by PRKG1. Phosphorylation at Ser-445, Ser-472 and Ser-909 by NUAK1 promotes interaction with 14-3-3, leading to inhibit interaction with myosin light chain MLC2, preventing dephosphorylation of MLC2. May be phosphorylated at Thr-694 by DMPK; may inhibit the myosin phosphatase activity. Phosphorylated at Ser-473 by CDK1 during mitosis, creating docking sites for the POLO box domains of PLK1. Subsequently, PLK1 binds and phosphorylates PPP1R12A. Expressed in striated and vascular smooth muscle, specificcally in type 2a fibers (at protein level). Expression levels are 20-30% higher in developed males than females (at protein level).

Its subcellular location is the cytoplasm. The protein resides in the cytoskeleton. It localises to the stress fiber. Its function is as follows. Key regulator of protein phosphatase 1C (PPP1C). Mediates binding to myosin. As part of the PPP1C complex, involved in dephosphorylation of PLK1. Capable of inhibiting HIF1AN-dependent suppression of HIF1A activity. The protein is Protein phosphatase 1 regulatory subunit 12A of Mus musculus (Mouse).